A 360-amino-acid polypeptide reads, in one-letter code: Photosystem II protein D1 3 (360 aa).

3 consecutive transmembrane segments (helical) span residues Tyr29–Val46, His118–Leu133, and Trp142–Ala156. His118 contributes to the chlorophyll a binding site. Position 126 (Tyr126) interacts with pheophytin a. Asp170 and Glu189 together coordinate [CaMn4O5] cluster. A helical transmembrane segment spans residues Phe197 to Leu218. Residue His198 coordinates chlorophyll a. Residues His215 and Ser264–Phe265 contribute to the a quinone site. Residue His215 coordinates Fe cation. Residue His272 participates in Fe cation binding. Residues Phe274 to Leu288 form a helical membrane-spanning segment. Positions 332, 333, 342, and 344 each coordinate [CaMn4O5] cluster. A propeptide spanning residues Ala345–Gly360 is cleaved from the precursor.

It belongs to the reaction center PufL/M/PsbA/D family. PSII is composed of 1 copy each of membrane proteins PsbA, PsbB, PsbC, PsbD, PsbE, PsbF, PsbH, PsbI, PsbJ, PsbK, PsbL, PsbM, PsbT, PsbX, PsbY, PsbZ, Psb30/Ycf12, peripheral proteins PsbO, CyanoQ (PsbQ), PsbU, PsbV and a large number of cofactors. It forms dimeric complexes. The D1/D2 heterodimer binds P680, chlorophylls that are the primary electron donor of PSII, and subsequent electron acceptors. It shares a non-heme iron and each subunit binds pheophytin, quinone, additional chlorophylls, carotenoids and lipids. D1 provides most of the ligands for the Mn4-Ca-O5 cluster of the oxygen-evolving complex (OEC). There is also a Cl(-1) ion associated with D1 and D2, which is required for oxygen evolution. The PSII complex binds additional chlorophylls, carotenoids and specific lipids. serves as cofactor. In terms of processing, tyr-161 forms a radical intermediate that is referred to as redox-active TyrZ, YZ or Y-Z. Post-translationally, C-terminally processed by CtpA; processing is essential to allow assembly of the oxygen-evolving complex and thus photosynthetic growth.

The protein resides in the cellular thylakoid membrane. The catalysed reaction is 2 a plastoquinone + 4 hnu + 2 H2O = 2 a plastoquinol + O2. Its function is as follows. Photosystem II (PSII) is a light-driven water:plastoquinone oxidoreductase that uses light energy to abstract electrons from H(2)O, generating O(2) and a proton gradient subsequently used for ATP formation. It consists of a core antenna complex that captures photons, and an electron transfer chain that converts photonic excitation into a charge separation. The D1/D2 (PsbA/PsbD) reaction center heterodimer binds P680, the primary electron donor of PSII as well as several subsequent electron acceptors. In Trichormus variabilis (strain ATCC 29413 / PCC 7937) (Anabaena variabilis), this protein is Photosystem II protein D1 3.